The chain runs to 119 residues: Ig heavy chain V region T601 (119 aa).

In terms of domain architecture, Ig-like spans 1-112 (EVKLLESGGG…GYFDVWGAGT (112 aa)).

The chain is Ig heavy chain V region T601 from Mus musculus (Mouse).